The chain runs to 1108 residues: Folliculin-interacting protein 2 (1108 aa).

The region spanning 38–456 (FGLSDIRLLV…TVMPVDHPPI (419 aa)) is the uDENN FNIP1/2-type domain. Disordered regions lie at residues 89 to 112 (QESSSSSGSSSSGSSSSHGFGGSL), 209 to 233 (RTGSNLAHSTPVDMPSRGQNEDRDS), 598 to 635 (SEGVNTSELGHKPEKNRCKRPEQNSEASSMGFQEAEPD), and 649 to 671 (QNDQEATQDCSSSPPSCEVPRVR). The span at 91–106 (SSSSSGSSSSGSSSSH) shows a compositional bias: low complexity. Phosphoserine is present on residues serine 212 and serine 217. Residues 464–1034 (TSQSVNMLAK…VSSLLQSILQ (571 aa)) enclose the cDENN FNIP1/2-type domain. An interaction with PRKAA1 region spans residues 540–905 (DDQVINGSKI…DEACVLALLE (366 aa)). Residues 606 to 620 (LGHKPEKNRCKRPEQ) are compositionally biased toward basic and acidic residues. Residues 652–663 (QEATQDCSSSPP) show a composition bias toward polar residues. Residues serine 720, serine 721, and serine 723 each carry the phosphoserine modification. A dDENN FNIP1/2-type domain is found at 1044-1099 (FCIMHLEDRLQEMYLKSKMLSEYLRGHTRVHVKELSVVLGIESNDLPLLTAIASTH).

It belongs to the FNIP family. As to quaternary structure, homodimer and homomultimer. Heterodimer and heteromultimer with FNIP1. Interacts (via C-terminus) with FLCN (via C-terminus). Phosphorylated FLCN is preferentially bound. Component of the lysosomal folliculin complex (LFC), composed of FLCN, FNIP1 (or FNIP2), RagA/RRAGA or RagB/RRAGB GDP-bound, RagC/RRAGC or RagD/RRAGD GTP-bound, and Ragulator. Interacts with PRKAA1, PRKAB1 and PRKAG1 subunits of 5'-AMP-activated protein kinase. Interacts with HSP70, HSP90AA1, STIP1, PTGES3, CDC37, BRAF, GCR and CDK4. Post-translationally, phosphorylated by AMPK.

The protein resides in the lysosome membrane. It localises to the cytoplasm. Its function is as follows. Binding partner of the GTPase-activating protein FLCN: involved in the cellular response to amino acid availability by regulating the non-canonical mTORC1 signaling cascade controlling the MiT/TFE factors TFEB and TFE3. Required to promote FLCN recruitment to lysosomes and interaction with Rag GTPases, leading to activation of the non-canonical mTORC1 signaling. In low-amino acid conditions, component of the lysosomal folliculin complex (LFC) on the membrane of lysosomes, which inhibits the GTPase-activating activity of FLCN, thereby inactivating mTORC1 and promoting nuclear translocation of TFEB and TFE3. Upon amino acid restimulation, disassembly of the LFC complex liberates the GTPase-activating activity of FLCN, leading to activation of mTORC1 and subsequent inactivation of TFEB and TFE3. Together with FLCN, regulates autophagy: following phosphorylation by ULK1, interacts with GABARAP and promotes autophagy. In addition to its role in mTORC1 signaling, also acts as a co-chaperone of HSP90AA1/Hsp90: inhibits the ATPase activity of HSP90AA1/Hsp90, leading to activate both kinase and non-kinase client proteins of HSP90AA1/Hsp90. Acts as a scaffold to load client protein FLCN onto HSP90AA1/Hsp90. Competes with the activating co-chaperone AHSA1 for binding to HSP90AA1, thereby providing a reciprocal regulatory mechanism for chaperoning of client proteins. May play a role in the signal transduction pathway of apoptosis induced by O6-methylguanine-mispaired lesions. The chain is Folliculin-interacting protein 2 from Mus musculus (Mouse).